The sequence spans 105 residues: Large ribosomal subunit protein bL21c (105 aa).

This sequence belongs to the bacterial ribosomal protein bL21 family. Part of the 50S ribosomal subunit.

The protein resides in the plastid. The protein localises to the chloroplast. In terms of biological role, this protein binds to 23S rRNA. This is Large ribosomal subunit protein bL21c from Thalassiosira pseudonana (Marine diatom).